The sequence spans 225 residues: MGFGDLKSPAGLQVLNDYLADKSYIEGYVPSQADVAVFEAVSSPPPADLCHALRWYNHIKSYEKEKASLPGVKKALGKYGPADVEDTTGSGATDSKDDDDIDLFGSDDEEESEEAKRLREERLAQYESKKAKKPALVAKSSILLDVKPWDDETDMAKLEECVRSIQADGLVWGSSKLVPVGYGIKKLQIQCVVEDDKVGTDMLEEQITAFEDYVQSMDVAAFNKI.

One can recognise a GST C-terminal domain in the interval 2–84 (GFGDLKSPAG…ALGKYGPADV (83 aa)). Residue K7 is modified to N6-acetyllysine. A phosphoserine mark is found at S8 and S42. The disordered stretch occupies residues 78-115 (KYGPADVEDTTGSGATDSKDDDDIDLFGSDDEEESEEA). Phosphothreonine occurs at positions 88 and 93. Phosphoserine occurs at positions 95 and 106. A compositionally biased stretch (acidic residues) spans 96–113 (KDDDDIDLFGSDDEEESE). K147 is covalently cross-linked (Glycyl lysine isopeptide (Lys-Gly) (interchain with G-Cter in SUMO2)). S174 is subject to Phosphoserine.

This sequence belongs to the EF-1-beta/EF-1-delta family. EF-1 is composed of 4 subunits: alpha, beta (alpha subunit of the eEF1B subcomplex), delta (beta subunit of the eEF1B subcomplex), and gamma (gamma subunit of the eEF1B subcomplex). Interacts with elongation factor EEF1A1. Post-translationally, phosphorylation affects the GDP/GTP exchange rate.

In terms of biological role, catalytic subunit of the guanine nucleotide exchange factor (GEF) (eEF1B subcomplex) of the eukaryotic elongation factor 1 complex (eEF1). Stimulates the exchange of GDP for GTP on elongation factor 1A (eEF1A), probably by displacing GDP from the nucleotide binding pocket in eEF1A. The protein is Elongation factor 1-beta (EEF1B2) of Homo sapiens (Human).